A 214-amino-acid chain; its full sequence is MQLKNPILGLCQQSTFMLSAAKVDQCPDDEGFEVAFAGRSNAGKSSALNTLTHASLARTSKTPGRTQLLNFFKLDDERRLVDLPGYGYAKVPIPLKQHWQRHLEAYLGGRESLKGLILMMDIRHPMTDFDLLMLDWAVAAGMPMHILLTKADKLTYGAAKNTLLKVQSEIRKGWGDQVTIQLFSAPKRMGLEEAYTVLAGWMELADKGAELPAE.

Positions 30–204 (EGFEVAFAGR…YTVLAGWMEL (175 aa)) constitute an EngB-type G domain. GTP contacts are provided by residues 38-45 (GRSNAGKS), 64-68 (GRTQL), 82-85 (DLPG), 149-152 (TKAD), and 182-185 (LFSA). Mg(2+)-binding residues include serine 45 and threonine 66.

The protein belongs to the TRAFAC class TrmE-Era-EngA-EngB-Septin-like GTPase superfamily. EngB GTPase family. It depends on Mg(2+) as a cofactor.

Necessary for normal cell division and for the maintenance of normal septation. The chain is Probable GTP-binding protein EngB from Pseudomonas fluorescens (strain Pf0-1).